The primary structure comprises 799 residues: MRCPSLTRLPYRAVSGLPRSVVRLQSQNFLTRRCASTAVLRSPTAAPAYQSILNKHLQQRRNASGTAAAVLEAAASDNLSQEAIIENLDPVEAGRLSRVRNIGIAAHIDSGKTTCTERVLFYTGRIKAIHEVRGGDKVGAKMDSMDLEREKGITIQSAATFCDWVKKDEDGKENKYHFNLIDTPGHIDFTIEVERALRVLDGAVMILCAVSGVQSQTITVDRQMRRYNVPRISFVNKMDRMGANPFKAVDQINNKLKLPAAAVQVPIGAEDEFEGVVDLIRMKAIYNRGPSGEELFETEEIPEKVKSTVEERRKKLIETLADVDDEIAELFILEEEPTEQQLKAAIRRATIGLKFTPVFMGSALANKSVQPMLDGVVDYLPNPAEVQNLALDKKRDEASVQLVPYQSLPLVGLAFKLEESNFGQLTYIRVYQGTLRKGANVFNARNDKKIKIPRIVRMHSNEMEEVSEVGAGEICAVFGVDCASGDTFTDGQLGYTMSSMFVPEPVISLSIKPKNNKDAAKFSKAMARFQREDPTFRVTYDVESEQTLISGMGELHLDIYVERMRREYNVDCETGPPQVAYRETIGNRVEFDHLLKKQSGGPGDYARVVGWMEPTGKLDDNVFEEQIVGGSISEKFLFACEKGFHLACEKGPLIGHKVLGTKMVINDGATHMTDSSEMSFKNATQQAFRKAFKESNPSVLEPMMKTVVTAPAEFQGDVISLLNKRNATINDSEVGVDEFTVYADCSLNGMFGFSSNLRAATQGKGEYTMEFSHYEKCPPQVQKELIAKYLKAQADRHKK.

Residues 1–34 constitute a mitochondrion transit peptide; sequence MRCPSLTRLPYRAVSGLPRSVVRLQSQNFLTRRC. The region spanning 97–384 is the tr-type G domain; the sequence is SRVRNIGIAA…GVVDYLPNPA (288 aa). GTP is bound by residues 106–113, 182–186, and 236–239; these read AHIDSGKT, DTPGH, and NKMD.

It belongs to the TRAFAC class translation factor GTPase superfamily. Classic translation factor GTPase family. EF-G/EF-2 subfamily.

It localises to the mitochondrion. Its pathway is protein biosynthesis; polypeptide chain elongation. Its function is as follows. Mitochondrial GTPase that catalyzes the GTP-dependent ribosomal translocation step during translation elongation. During this step, the ribosome changes from the pre-translocational (PRE) to the post-translocational (POST) state as the newly formed A-site-bound peptidyl-tRNA and P-site-bound deacylated tRNA move to the P and E sites, respectively. Catalyzes the coordinated movement of the two tRNA molecules, the mRNA and conformational changes in the ribosome. The protein is Elongation factor G, mitochondrial (mef1) of Aspergillus flavus (strain ATCC 200026 / FGSC A1120 / IAM 13836 / NRRL 3357 / JCM 12722 / SRRC 167).